The chain runs to 259 residues: Small ribosomal subunit protein uS2 (259 aa).

Residues 228 to 259 (VSFGSEEAEENNQKEDNEEIFEIEDVDESEEM) form a disordered region. A compositionally biased stretch (acidic residues) spans 233-259 (EEAEENNQKEDNEEIFEIEDVDESEEM).

Belongs to the universal ribosomal protein uS2 family.

This Thermosipho africanus (strain TCF52B) protein is Small ribosomal subunit protein uS2.